We begin with the raw amino-acid sequence, 431 residues long: Bone morphogenetic protein 7 (431 aa).

An N-terminal signal peptide occupies residues 1 to 29 (MHVRSLRAAAPHSFVALWAPLFLLRSALA). A propeptide spanning residues 30-292 (DFSLDNEVHS…ATEVHFRSIR (263 aa)) is cleaved from the precursor. 4 N-linked (GlcNAc...) asparagine glycosylation sites follow: Asn-187, Asn-302, Asn-321, and Asn-372. A disordered region spans residues 291–311 (IRSTGSKQRSQNRSKTPKNQE). Disulfide bonds link Cys-330–Cys-396, Cys-359–Cys-428, and Cys-363–Cys-430.

Belongs to the TGF-beta family. Homodimer; disulfide-linked. Interacts with SOSTDC1. Interacts with TWSG1. Interacts with FBN1 (via N-terminal domain) and FBN2. Interacts with type I receptor ACVR1. Interacts with type II receptor ACVR2A. Interacts with NOG; this interaction inhibits canonical BMP signaling. Interacts with SCUBE3. Interacts with ERFE; the interaction inhibits BMP-induced transcription of HAMP. Interacts with TGFBR3. In terms of processing, several N-termini starting at positions 293, 300, 315 and 316 have been identified by direct sequencing resulting in secretion of different mature forms. As to expression, expressed in the kidney and bladder. Lower levels seen in the brain.

The protein localises to the secreted. Functionally, growth factor of the TGF-beta superfamily that plays important role in various biological processes, including embryogenesis, hematopoiesis, neurogenesis and skeletal morphogenesis. Initiates the canonical BMP signaling cascade by associating with type I receptor ACVR1 and type II receptor ACVR2A. Once all three components are bound together in a complex at the cell surface, ACVR2A phosphorylates and activates ACVR1. In turn, ACVR1 propagates signal by phosphorylating SMAD1/5/8 that travel to the nucleus and act as activators and repressors of transcription of target genes. For specific functions such as growth cone collapse in developing spinal neurons and chemotaxis of monocytes, also uses BMPR2 as type II receptor. Can also signal through non-canonical pathways such as P38 MAP kinase signaling cascade that promotes brown adipocyte differentiation through activation of target genes, including members of the SOX family of transcription factors. Promotes the expression of HAMP, this is repressed by its interaction with ERFE. The protein is Bone morphogenetic protein 7 (BMP7) of Homo sapiens (Human).